The sequence spans 565 residues: Hemagglutinin-neuraminidase (565 aa).

At 1–20 the chain is on the intravirion side; sequence MVAEDAPVRGTCRVLFRTTT. Residues 21–41 form a helical membrane-spanning segment; the sequence is LIFLCTLLALSISILYESLII. The Virion surface segment spans residues 42–565; that stretch reads QKQIMSQAGS…VPFIRQVTLS (524 aa). Residues Asn110 and Asn139 are each glycosylated (N-linked (GlcNAc...) asparagine; by host). Disulfide bonds link Cys161-Cys185, Cys175-Cys236, and Cys227-Cys240. The tract at residues 223–228 is involved in neuraminidase activity; it reads NRKSCS. N-linked (GlcNAc...) asparagine; by host glycosylation is present at Asn267. 3 disulfide bridges follow: Cys333–Cys454, Cys365–Cys375, and Cys448–Cys458. Asn504 is a glycosylation site (N-linked (GlcNAc...) asparagine; by host). The cysteines at positions 528 and 539 are disulfide-linked.

The protein belongs to the paramyxoviruses hemagglutinin-neuraminidase family. In terms of assembly, homotetramer; composed of disulfide-linked homodimers. Interacts with F protein trimer.

It is found in the virion membrane. It localises to the host cell membrane. It carries out the reaction Hydrolysis of alpha-(2-&gt;3)-, alpha-(2-&gt;6)-, alpha-(2-&gt;8)- glycosidic linkages of terminal sialic acid residues in oligosaccharides, glycoproteins, glycolipids, colominic acid and synthetic substrates.. In terms of biological role, attaches the virus to sialic acid-containing cell receptors and thereby initiating infection. Binding of HN protein to the receptor induces a conformational change that allows the F protein to trigger virion/cell membranes fusion. Its function is as follows. Neuraminidase activity ensures the efficient spread of the virus by dissociating the mature virions from the neuraminic acid containing glycoproteins. The protein is Hemagglutinin-neuraminidase (HN) of Parainfluenza virus 5 (isolate Canine/CPI-) (PIV5).